A 526-amino-acid polypeptide reads, in one-letter code: Peptide chain release factor 3 (526 aa).

Residues 8-277 (SKRRTFAIIS…GLTRWAPAPQ (270 aa)) enclose the tr-type G domain. GTP contacts are provided by residues 17–24 (SHPDAGKT), 85–89 (DTPGH), and 139–142 (NKLD).

Belongs to the TRAFAC class translation factor GTPase superfamily. Classic translation factor GTPase family. PrfC subfamily.

Its subcellular location is the cytoplasm. Functionally, increases the formation of ribosomal termination complexes and stimulates activities of RF-1 and RF-2. It binds guanine nucleotides and has strong preference for UGA stop codons. It may interact directly with the ribosome. The stimulation of RF-1 and RF-2 is significantly reduced by GTP and GDP, but not by GMP. In Vibrio atlanticus (strain LGP32) (Vibrio splendidus (strain Mel32)), this protein is Peptide chain release factor 3.